Reading from the N-terminus, the 294-residue chain is 4-hydroxy-tetrahydrodipicolinate synthase (294 aa).

Thr-45 provides a ligand contact to pyruvate. The active-site Proton donor/acceptor is Tyr-133. The active-site Schiff-base intermediate with substrate is the Lys-161. Residue Ile-203 coordinates pyruvate.

Belongs to the DapA family. Homotetramer; dimer of dimers.

The protein localises to the cytoplasm. It carries out the reaction L-aspartate 4-semialdehyde + pyruvate = (2S,4S)-4-hydroxy-2,3,4,5-tetrahydrodipicolinate + H2O + H(+). It functions in the pathway amino-acid biosynthesis; L-lysine biosynthesis via DAP pathway; (S)-tetrahydrodipicolinate from L-aspartate: step 3/4. Catalyzes the condensation of (S)-aspartate-beta-semialdehyde [(S)-ASA] and pyruvate to 4-hydroxy-tetrahydrodipicolinate (HTPA). In Buchnera aphidicola subsp. Schizaphis graminum (strain Sg), this protein is 4-hydroxy-tetrahydrodipicolinate synthase.